The sequence spans 248 residues: tRNA pseudouridine synthase A (248 aa).

Asp52 functions as the Nucleophile in the catalytic mechanism. Tyr113 contributes to the substrate binding site.

It belongs to the tRNA pseudouridine synthase TruA family. As to quaternary structure, homodimer.

The catalysed reaction is uridine(38/39/40) in tRNA = pseudouridine(38/39/40) in tRNA. Its function is as follows. Formation of pseudouridine at positions 38, 39 and 40 in the anticodon stem and loop of transfer RNAs. This is tRNA pseudouridine synthase A from Mesorhizobium japonicum (strain LMG 29417 / CECT 9101 / MAFF 303099) (Mesorhizobium loti (strain MAFF 303099)).